A 164-amino-acid chain; its full sequence is 5-formyltetrahydrofolate cyclo-ligase (164 aa).

Residue 3–7 coordinates ATP; the sequence is KNALR. 2 residues coordinate substrate: Glu-50 and Glu-55. Residue 115–123 coordinates ATP; the sequence is RLGFGKGYY. Asp-124 lines the Mg(2+) pocket. Residues Arg-125 and Trp-153 each coordinate ATP. Asp-154 serves as a coordination point for Mg(2+).

The protein belongs to the 5-formyltetrahydrofolate cyclo-ligase family. As to quaternary structure, monomer or homodimer. The cofactor is Mg(2+). Requires Mn(2+) as cofactor. Ca(2+) serves as cofactor. Zn(2+) is required as a cofactor. It depends on Fe(2+) as a cofactor. The cofactor is Co(2+). Requires Cu(2+) as cofactor.

The protein localises to the cytoplasm. The enzyme catalyses (6S)-5-formyl-5,6,7,8-tetrahydrofolate + ATP = (6R)-5,10-methenyltetrahydrofolate + ADP + phosphate. Involved in folate metabolism. Catalyzes the irreversible conversion of 5-formyltetrahydrofolate (5-FTHF) to yield 5,10-methenyltetrahydrofolate. This chain is 5-formyltetrahydrofolate cyclo-ligase, found in Mycoplasma pneumoniae (strain ATCC 29342 / M129 / Subtype 1) (Mycoplasmoides pneumoniae).